The primary structure comprises 208 residues: 3-demethoxyubiquinol 3-hydroxylase (208 aa).

Positions 57, 87, 90, 139, 171, and 174 each coordinate Fe cation.

The protein belongs to the COQ7 family. Requires Fe cation as cofactor.

It localises to the cell membrane. The enzyme catalyses a 5-methoxy-2-methyl-3-(all-trans-polyprenyl)benzene-1,4-diol + AH2 + O2 = a 3-demethylubiquinol + A + H2O. It functions in the pathway cofactor biosynthesis; ubiquinone biosynthesis. Functionally, catalyzes the hydroxylation of 2-nonaprenyl-3-methyl-6-methoxy-1,4-benzoquinol during ubiquinone biosynthesis. This is 3-demethoxyubiquinol 3-hydroxylase from Burkholderia vietnamiensis (strain G4 / LMG 22486) (Burkholderia cepacia (strain R1808)).